We begin with the raw amino-acid sequence, 33 residues long: Mu-theraphotoxin-Osp1a (33 aa).

Disulfide bonds link Cys-2–Cys-17, Cys-9–Cys-22, and Cys-16–Cys-29.

The protein belongs to the neurotoxin 10 (Hwtx-1) family. In terms of tissue distribution, expressed by the venom gland.

The protein localises to the secreted. In terms of biological role, voltage-gated sodium channel Nav1.7/SCN9A inhibitor. This Orphnaecus sp. (strain Sibaliw/Philippines) (Tarantula spider) protein is Mu-theraphotoxin-Osp1a.